Consider the following 230-residue polypeptide: Spliceosome-associated protein CWC15 homolog (230 aa).

Disordered regions lie at residues 1-157 and 164-183; these read MTTA…EEKQ and AGNPLLNDTPAGSSTSGGDF. Residues 25-34 are compositionally biased toward polar residues; that stretch reads KLSNQYSSKD. 2 coiled-coil regions span residues 47-82 and 119-164; these read GQETEADLRKKDLRRELEDKERNAIREKRARDSASS and DSDE…NILA. A compositionally biased stretch (basic and acidic residues) spans 52–78; it reads ADLRKKDLRRELEDKERNAIREKRARD. Acidic residues predominate over residues 104 to 125; sequence DADEAVDELNSSDDDDSDEDDT. The span at 131–157 shows a compositional bias: basic and acidic residues; sequence ELEKIKKERAEEKAARDEEIKEKEEKQ.

This sequence belongs to the CWC15 family. In terms of assembly, component of spliceosomal complex.

The protein localises to the nucleus. Component of a spliceosomal complex that is required for activating pre-mRNA splicing. In Caenorhabditis elegans, this protein is Spliceosome-associated protein CWC15 homolog.